The chain runs to 171 residues: Transcription factor E (171 aa).

Positions 1–81 constitute an HTH TFE/IIEalpha-type domain; sequence MLNLAKELVG…YWKVNVNQIN (81 aa).

The protein belongs to the TFE family. Monomer. Interaction with RNA polymerase subunits RpoF and RpoE is necessary for Tfe stimulatory transcription activity. Able to interact with Tbp and RNA polymerase in the absence of DNA promoter. Interacts both with the preinitiation and elongation complexes.

Transcription factor that plays a role in the activation of archaeal genes transcribed by RNA polymerase. Facilitates transcription initiation by enhancing TATA-box recognition by TATA-box-binding protein (Tbp), and transcription factor B (Tfb) and RNA polymerase recruitment. Not absolutely required for transcription in vitro, but particularly important in cases where Tbp or Tfb function is not optimal. It dynamically alters the nucleic acid-binding properties of RNA polymerases by stabilizing the initiation complex and destabilizing elongation complexes. Seems to translocate with the RNA polymerase following initiation and acts by binding to the non template strand of the transcription bubble in elongation complexes. This is Transcription factor E from Sulfolobus acidocaldarius (strain ATCC 33909 / DSM 639 / JCM 8929 / NBRC 15157 / NCIMB 11770).